Reading from the N-terminus, the 371-residue chain is tRNA-specific 2-thiouridylase MnmA (371 aa).

Residues 13–20 (GMSGGVDS) and Met-39 contribute to the ATP site. Residues 99 to 101 (NPD) form an interaction with target base in tRNA region. The active-site Nucleophile is Cys-104. Cys-104 and Cys-200 are oxidised to a cystine. Gly-128 serves as a coordination point for ATP. Positions 150–152 (KDQ) are interaction with tRNA. The Cysteine persulfide intermediate role is filled by Cys-200. Positions 308–309 (RY) are interaction with tRNA.

Belongs to the MnmA/TRMU family.

It is found in the cytoplasm. The catalysed reaction is S-sulfanyl-L-cysteinyl-[protein] + uridine(34) in tRNA + AH2 + ATP = 2-thiouridine(34) in tRNA + L-cysteinyl-[protein] + A + AMP + diphosphate + H(+). Functionally, catalyzes the 2-thiolation of uridine at the wobble position (U34) of tRNA, leading to the formation of s(2)U34. In Bacillus cereus (strain ATCC 14579 / DSM 31 / CCUG 7414 / JCM 2152 / NBRC 15305 / NCIMB 9373 / NCTC 2599 / NRRL B-3711), this protein is tRNA-specific 2-thiouridylase MnmA.